A 746-amino-acid polypeptide reads, in one-letter code: Quiannulatene synthase (746 aa).

Residues 1–336 (MASEVIVISD…SRYPTKTELN (336 aa)) are sesterterpenoid synthase. A Mg(2+)-binding site is contributed by Asp-95. Positions 338-746 (PEVIIVDGEL…VELMLRRLWV (409 aa)) are geranylfarnesyl diphosphate synthase. Isopentenyl diphosphate is bound by residues Lys-465, Arg-468, and His-497. Mg(2+) contacts are provided by Asp-504 and Asp-508. Arg-513 provides a ligand contact to dimethylallyl diphosphate. Isopentenyl diphosphate is bound at residue Arg-514. Residues Lys-591, Thr-592, Gln-628, Asn-635, and Lys-645 each coordinate dimethylallyl diphosphate.

It in the N-terminal section; belongs to the terpene synthase family. This sequence in the C-terminal section; belongs to the FPP/GGPP synthase family. It depends on Mg(2+) as a cofactor.

The enzyme catalyses isopentenyl diphosphate + (2E,6E)-farnesyl diphosphate = (2E,6E,10E)-geranylgeranyl diphosphate + diphosphate. It carries out the reaction (2E,6E,10E,14E)-geranylfarnesyl diphosphate = quiannulatene + diphosphate. Its pathway is secondary metabolite biosynthesis; terpenoid biosynthesis. In terms of biological role, bifunctional sesterterpene synthase; part of the gene cluster that mediates the biosynthesis of the pentacyclic sesterterpene quiannulatic acid. The first step of the pathway is performed by the sesterterpene synthase (QS) that possesses both prenyl transferase and terpene cyclase activity, converting isopentenyl diphosphate and dimethylallyl diphosphate into geranylfarnesyl diphosphate (GFPP) and further converting GFPP into quiannulatene via an unprecedented cyclization mode which involves three rounds of hydride shifts and two successive C-C bond migrations to construct the 5-6-5-5-5 fused ring. The cytochrome P450 monooxygenase Qnn-P450 then oxidizes quiannulatene at C-19 in 3 successive reactions to afford quiannulatic acid. The polypeptide is Quiannulatene synthase (Emericella variicolor (Aspergillus stellatus)).